A 427-amino-acid chain; its full sequence is C4-dicarboxylate TRAP transporter large permease protein DctM (427 aa).

13 consecutive transmembrane segments (helical) span residues 2–22 (TILFLFLLLFLLMFIGVPIAV), 55–75 (TLLAIPFFLLSGAFMTTGGVA), 91–111 (GGLAIAAVLACMLFAALSGSS), 115–135 (VAAVGSIAIAGMVRSGYPQAF), 138–158 (GIVCNAGTLGILIPPSIVMVV), 171–191 (FIAGVVPGLLLGLILMVVIYI), 216–236 (ALWGLLLMVIILGGIYSGAFT), 237–257 (PTEAAAVAAVYSAFVALFVYR), 274–294 (LTIMLMFIIANAMLFAHVLTT), 310–330 (LSPWMFLLVVNIVLLIAGNFM), 335–355 (IILILAPIFFPIAMELGIDPI), 359–379 (IIMVVNMEIGLITPPVGLNLF), and 396–416 (ALPWLMILLVFLIIVTYIPAV).

The protein belongs to the TRAP transporter large permease family. As to quaternary structure, the complex comprises the extracytoplasmic solute receptor protein DctP, and the two transmembrane proteins DctQ and DctM.

It is found in the cell inner membrane. Part of the tripartite ATP-independent periplasmic (TRAP) transport system DctPQM involved in C4-dicarboxylates uptake. The sequence is that of C4-dicarboxylate TRAP transporter large permease protein DctM from Pseudomonas aeruginosa (strain ATCC 15692 / DSM 22644 / CIP 104116 / JCM 14847 / LMG 12228 / 1C / PRS 101 / PAO1).